Consider the following 1152-residue polypeptide: Syntaxin-binding protein 5 (1152 aa).

Residues 14–35 (TAGSSSASQQQQQQQHPPGNRE) are disordered. The segment covering 17–28 (SSSASQQQQQQQ) has biased composition (low complexity). WD repeat units lie at residues 62-95 (SALA…CYCQ), 102-141 (VIQL…SLKF), 146-182 (VTFC…GYVI), 201-235 (HISD…DYRY), 241-273 (IHSV…PTKP), 295-337 (PILK…KSTA), 345-379 (IVDF…LIDL), 401-478 (TCCE…YKLK), 506-620 (QIIS…ELVI), and 634-696 (TSLA…SGAG). Disordered stretches follow at residues 557–596 (TPEG…GLRD) and 675–731 (SNDP…QKVN). S693 carries the phosphoserine modification. A compositionally biased stretch (low complexity) spans 713–722 (SPTSGSSSPH). The residue at position 724 (S724) is a Phosphoserine; by PKA. At S760 the chain carries Phosphoserine. A Phosphothreonine modification is found at T763. Residue S783 is modified to Phosphoserine. T785 is modified (phosphothreonine). S786 bears the Phosphoserine mark. 4 WD repeats span residues 795–852 (ISAL…SGTI), 861–935 (RMAF…QNCA), 940–984 (ITET…LDVY), and 998–1021 (CFAN…TYSQ). Residues 879-893 (WTEHNVPEEKDEKEK) show a composition bias toward basic and acidic residues. The segment at 879 to 907 (WTEHNVPEEKDEKEKLKKRRPVSVSPSSS) is disordered. S901 and S903 each carry phosphoserine. Phosphothreonine is present on T1040. Residues S1059 and S1132 each carry the phosphoserine modification. The v-SNARE coiled-coil homology domain maps to 1087-1147 (GIEGVKGAAS…HEMMLKYKDK (61 aa)).

This sequence belongs to the WD repeat L(2)GL family. As to quaternary structure, part of a complex that contains STXBP5, STX4A and SNAP23. Interacts with STX1A and STX4A via its v-SNARE homology domain. Part of a complex that contains STX1, STXBP5, SNAP25 and SYT1. Post-translationally, phosphorylation by PKA reduces interaction with STX1A and enhances synaptic neurotransmitter release. In terms of tissue distribution, isoform 1 is detected in heart, brain, lung, liver, skeletal muscle, kidney and testis. Isoform 2 is detected in brain and in testis. Isoform 3 is detected in testis.

The protein resides in the cytoplasm. Its subcellular location is the cell membrane. It is found in the cytoplasmic vesicle membrane. It localises to the synapse. The protein localises to the cytoplasmic vesicle. The protein resides in the secretory vesicle. Its subcellular location is the synaptic vesicle. In terms of biological role, inhibits translocation of GLUT4 from intracellular vesicles to the plasma membrane. Plays a regulatory role in calcium-dependent exocytosis and neurotransmitter release. Inhibits membrane fusion between transport vesicles and the plasma membrane. May modulate the assembly of trans-SNARE complexes between transport vesicles and the plasma membrane. Competes with STXBP1 for STX1 binding. In Rattus norvegicus (Rat), this protein is Syntaxin-binding protein 5 (Stxbp5).